The following is a 301-amino-acid chain: ATP synthase gamma chain (301 aa).

The protein belongs to the ATPase gamma chain family. F-type ATPases have 2 components, CF(1) - the catalytic core - and CF(0) - the membrane proton channel. CF(1) has five subunits: alpha(3), beta(3), gamma(1), delta(1), epsilon(1). CF(0) has three main subunits: a, b and c.

The protein localises to the cell inner membrane. Its function is as follows. Produces ATP from ADP in the presence of a proton gradient across the membrane. The gamma chain is believed to be important in regulating ATPase activity and the flow of protons through the CF(0) complex. The sequence is that of ATP synthase gamma chain from Helicobacter pylori (strain ATCC 700392 / 26695) (Campylobacter pylori).